The primary structure comprises 75 residues: Putative defensin-like protein 271 (75 aa).

A signal peptide spans 1-23 (MTSMKLHIVALCIIVSFLVNVQS). Cystine bridges form between Cys-33/Cys-72, Cys-39/Cys-61, Cys-45/Cys-70, and Cys-49/Cys-71.

The protein belongs to the DEFL family.

The protein resides in the secreted. This Arabidopsis thaliana (Mouse-ear cress) protein is Putative defensin-like protein 271.